The primary structure comprises 316 residues: Pantothenate kinase (316 aa).

ATP is bound at residue 95 to 102; sequence GSVAVGKS.

Belongs to the prokaryotic pantothenate kinase family.

The protein resides in the cytoplasm. It carries out the reaction (R)-pantothenate + ATP = (R)-4'-phosphopantothenate + ADP + H(+). It functions in the pathway cofactor biosynthesis; coenzyme A biosynthesis; CoA from (R)-pantothenate: step 1/5. This chain is Pantothenate kinase, found in Shewanella loihica (strain ATCC BAA-1088 / PV-4).